The chain runs to 218 residues: MSEFNKDDYLNDLPDPSDAEAAAQASSGADASAESGSAQDSAAQAPSNEGADAAPAAAEGEKTGEGQSDSADTLTPLGKAKKEAADYLEALQRERAEFINYRNRTQKEQERFRQHGIIDVLTALLPALDDIDRIREHSEMDDSFKAVATKIDKAFEKFGVEKFGEKGEDFDPTKHDAILHKPDADAEKETVDTVVEAGYRIGDRVIRAARVVVASPQN.

The segment at 1-78 (MSEFNKDDYL…DSADTLTPLG (78 aa)) is disordered. Residues 14–58 (PDPSDAEAAAQASSGADASAESGSAQDSAAQAPSNEGADAAPAAA) are compositionally biased toward low complexity.

It belongs to the GrpE family. In terms of assembly, homodimer.

The protein resides in the cytoplasm. Its function is as follows. Participates actively in the response to hyperosmotic and heat shock by preventing the aggregation of stress-denatured proteins, in association with DnaK and GrpE. It is the nucleotide exchange factor for DnaK and may function as a thermosensor. Unfolded proteins bind initially to DnaJ; upon interaction with the DnaJ-bound protein, DnaK hydrolyzes its bound ATP, resulting in the formation of a stable complex. GrpE releases ADP from DnaK; ATP binding to DnaK triggers the release of the substrate protein, thus completing the reaction cycle. Several rounds of ATP-dependent interactions between DnaJ, DnaK and GrpE are required for fully efficient folding. This Bifidobacterium longum (strain NCC 2705) protein is Protein GrpE.